The sequence spans 167 residues: Large ribosomal subunit protein uL10 (167 aa).

The protein belongs to the universal ribosomal protein uL10 family. In terms of assembly, part of the ribosomal stalk of the 50S ribosomal subunit. The N-terminus interacts with L11 and the large rRNA to form the base of the stalk. The C-terminus forms an elongated spine to which L12 dimers bind in a sequential fashion forming a multimeric L10(L12)X complex.

In terms of biological role, forms part of the ribosomal stalk, playing a central role in the interaction of the ribosome with GTP-bound translation factors. The chain is Large ribosomal subunit protein uL10 from Cytophaga hutchinsonii (strain ATCC 33406 / DSM 1761 / CIP 103989 / NBRC 15051 / NCIMB 9469 / D465).